A 424-amino-acid chain; its full sequence is Enolase (424 aa).

Gln162 is a binding site for (2R)-2-phosphoglycerate. The active-site Proton donor is Glu204. Mg(2+)-binding residues include Asp241, Glu284, and Asp311. Residues Lys336, Arg365, Ser366, and Lys387 each contribute to the (2R)-2-phosphoglycerate site. Residue Lys336 is the Proton acceptor of the active site.

This sequence belongs to the enolase family. It depends on Mg(2+) as a cofactor.

Its subcellular location is the cytoplasm. The protein localises to the secreted. It localises to the cell surface. It catalyses the reaction (2R)-2-phosphoglycerate = phosphoenolpyruvate + H2O. It participates in carbohydrate degradation; glycolysis; pyruvate from D-glyceraldehyde 3-phosphate: step 4/5. In terms of biological role, catalyzes the reversible conversion of 2-phosphoglycerate (2-PG) into phosphoenolpyruvate (PEP). It is essential for the degradation of carbohydrates via glycolysis. The chain is Enolase from Sinorhizobium medicae (strain WSM419) (Ensifer medicae).